The primary structure comprises 432 residues: Adenylosuccinate synthetase (432 aa).

GTP is bound by residues 13–19 (GDEGKGK) and 41–43 (GHT). Aspartate 14 serves as the catalytic Proton acceptor. Aspartate 14 and glycine 41 together coordinate Mg(2+). Residues 14–17 (DEGK), 39–42 (NAGH), threonine 130, arginine 144, glutamine 225, threonine 240, and arginine 304 contribute to the IMP site. The active-site Proton donor is the histidine 42. Residue 300 to 306 (ATTGRKR) participates in substrate binding. Residues arginine 306, 332-334 (KLD), and 415-417 (STG) each bind GTP.

The protein belongs to the adenylosuccinate synthetase family. As to quaternary structure, homodimer. Mg(2+) is required as a cofactor.

It is found in the cytoplasm. It catalyses the reaction IMP + L-aspartate + GTP = N(6)-(1,2-dicarboxyethyl)-AMP + GDP + phosphate + 2 H(+). It participates in purine metabolism; AMP biosynthesis via de novo pathway; AMP from IMP: step 1/2. Its function is as follows. Plays an important role in the de novo pathway of purine nucleotide biosynthesis. Catalyzes the first committed step in the biosynthesis of AMP from IMP. The sequence is that of Adenylosuccinate synthetase from Vibrio cholerae serotype O1 (strain M66-2).